We begin with the raw amino-acid sequence, 34 residues long: Delta-theraphotoxin-Hm1b (34 aa).

Cystine bridges form between Cys-2–Cys-16, Cys-9–Cys-21, and Cys-15–Cys-28. Phe-34 bears the Phenylalanine amide mark.

It belongs to the neurotoxin 10 (Hwtx-1) family. 09 (HaTx) subfamily. In terms of tissue distribution, expressed by the venom gland.

The protein localises to the secreted. In terms of biological role, gating-modifier toxin that potently and selectively acts on Nav1.1/SCN1A and Nav1.3/SCN3A. It enhances hNav1.1/SCN1A currents and delays fast inactivation of the channel (EC(50)=11.6 nM), leading to a sustained current. Similar effects are observed at Nav1.3/SCN3A (EC(50)=11.8 nM), but with less sustained currents. When tested on Nav1.2/SCN2A, the native toxin decreases the peak current by 50% at saturating concentration, whereas the recombinant toxin only shows a weak decrease of peak current. The native toxin specifically activates the voltage-gated sodium channel Nav1.1/SCN1A in somatosensory neurons to elicit acute pain and mechanical allodynia. When tested on Nav1.1/SCN1A, the toxin induces a hyperpolarising shift of the voltage-dependence of steady-state activation, and induces a depolarizing shift in the voltage dependence of inactivation. In addition, it does not modify the recovery from fast inactivation in Nav1.1/SCN1A. The toxin hydrophobic face probably interacts with the domain IV voltage-sensor of Nav1.1/SCN1A and Nav1.3/SCN3A and may trap the voltage-sensing S4 helix in a partially activated state. In vivo, intracerebroventricular injection into mice elicits convulsions, spasms, tremors and rapid death. When injected into mouse hindpaw, the toxin elicits an immediate and robust response to pain. However, intraplantar injection of toxin does not cause neurogenic inflammation or alter sensitivity to heat, indicative of a modality-specific effect on mechanosensitive neurons. This chain is Delta-theraphotoxin-Hm1b, found in Heteroscodra maculata (Togo starburst tarantula).